We begin with the raw amino-acid sequence, 441 residues long: MSAREVNFDGLPGLTHHYAGLSFGNEASARHQHQVSNPKLAALQGLKKMKTLADLGYAQGVIPPHERPNIEALRQLGFSGSDAQVLAQAAKQAPKLLSAVSSASAMWVANAATVSPSVDSRDGRVHLTVANLNNKYHRSIEAPTTAALLRAIFRDDEHFSVHDALPQVALFGDEGAANHNRFSNGYGEPGVQLFVYGCAQAGGIRPLHYPARQTREASEAVARLNQLDAARTLYAQQDPVVIDAGVFHNDVIAVSNQQTLFCHQRAFLNQPQLMARLAQKVPGFNLIEVPDERVSVADAVATYLFNSQLLSKDNGKMLLILPEEARRHAGVWRWLTEMVAGDGTIDELKVLDLRESMCNGGGPACLRLRVVLNAQQQAAVNPAVMMNETLYATLCGWVERHYRDRLSQADLADPQLLSEGREALDELTKLLDLGHVYRFQQ.

Residues 19-28 (AGLSFGNEAS), Asn110, and 137-138 (HR) contribute to the substrate site. The active site involves Glu174. Residue Arg212 coordinates substrate. The active site involves His248. 2 residues coordinate substrate: Asp250 and Asn359. The active-site Nucleophile is the Cys365.

This sequence belongs to the succinylarginine dihydrolase family. Homodimer.

The catalysed reaction is N(2)-succinyl-L-arginine + 2 H2O + 2 H(+) = N(2)-succinyl-L-ornithine + 2 NH4(+) + CO2. The protein operates within amino-acid degradation; L-arginine degradation via AST pathway; L-glutamate and succinate from L-arginine: step 2/5. Its function is as follows. Catalyzes the hydrolysis of N(2)-succinylarginine into N(2)-succinylornithine, ammonia and CO(2). The sequence is that of N-succinylarginine dihydrolase from Erwinia tasmaniensis (strain DSM 17950 / CFBP 7177 / CIP 109463 / NCPPB 4357 / Et1/99).